Here is a 933-residue protein sequence, read N- to C-terminus: Phosphoenolpyruvate carboxylase (933 aa).

Catalysis depends on residues His158 and Lys592.

The protein belongs to the PEPCase type 1 family. Requires Mg(2+) as cofactor.

The catalysed reaction is oxaloacetate + phosphate = phosphoenolpyruvate + hydrogencarbonate. In terms of biological role, forms oxaloacetate, a four-carbon dicarboxylic acid source for the tricarboxylic acid cycle. In Nitrosomonas eutropha (strain DSM 101675 / C91 / Nm57), this protein is Phosphoenolpyruvate carboxylase.